The sequence spans 362 residues: Glucuronokinase 1 (362 aa).

126-136 (PRQTGLSGSSA) is an ATP binding site. Asp179 serves as the catalytic Proton acceptor.

It belongs to the GHMP kinase family. Requires Mg(2+) as cofactor. The cofactor is Mn(2+). Co(2+) is required as a cofactor. As to expression, highly expressed in pollen. Detected in seedlings, inflorescences, seeds, leaves and roots.

The enzyme catalyses D-glucuronate + ATP = 1-phospho-alpha-D-glucuronate + ADP + H(+). Its function is as follows. Sugar-1-kinase with a strict substrate specificity for D-glucuronic acid and ATP. Involved in the biosynthesis of UDP-glucuronic acid (UDP-GlcA), providing nucleotide sugars for cell-wall polymers. May be also involved in a salvage pathway for glucuronic acid. This chain is Glucuronokinase 1 (GLCAK1), found in Arabidopsis thaliana (Mouse-ear cress).